Here is a 106-residue protein sequence, read N- to C-terminus: MFSFFTYFLLSALLLSASCRQPSMDTSKADRILREIEMETELENQLSRARRVPAGEVRACGRRLLLFVWSTCGEPCTPQEDMDIATVCCTTQCTPSYIKQACCPEK.

Residues 1-19 form the signal peptide; sequence MFSFFTYFLLSALLLSASC. The propeptide at 20–51 is removed; by convertase egl-3; that stretch reads RQPSMDTSKADRILREIEMETELENQLSRARR. Cystine bridges form between Cys-60/Cys-89, Cys-72/Cys-102, Cys-76/Cys-103, and Cys-88/Cys-93.

This sequence belongs to the insulin family. Expressed by ASI and ASJ sensory neurons and weakly by ventral cord motor neurons.

It is found in the secreted. Functionally, probable insulin-like peptide which negatively regulates synapse development at the neuromuscular junctions. Probably acts as a daf-2/InsR agonist ligand to prevent dauer formation under optimal environmental conditions. The sequence is that of Probable insulin-like peptide beta-type 1 (ins-4) from Caenorhabditis elegans.